The sequence spans 240 residues: Probable transcriptional regulatory protein jhp_0149 (240 aa).

This sequence belongs to the TACO1 family.

It is found in the cytoplasm. This Helicobacter pylori (strain J99 / ATCC 700824) (Campylobacter pylori J99) protein is Probable transcriptional regulatory protein jhp_0149.